We begin with the raw amino-acid sequence, 513 residues long: ATP synthase subunit alpha (513 aa).

169–176 serves as a coordination point for ATP; it reads GDRQTGKT.

This sequence belongs to the ATPase alpha/beta chains family. In terms of assembly, F-type ATPases have 2 components, CF(1) - the catalytic core - and CF(0) - the membrane proton channel. CF(1) has five subunits: alpha(3), beta(3), gamma(1), delta(1), epsilon(1). CF(0) has three main subunits: a(1), b(2) and c(9-12). The alpha and beta chains form an alternating ring which encloses part of the gamma chain. CF(1) is attached to CF(0) by a central stalk formed by the gamma and epsilon chains, while a peripheral stalk is formed by the delta and b chains.

The protein resides in the cell inner membrane. The catalysed reaction is ATP + H2O + 4 H(+)(in) = ADP + phosphate + 5 H(+)(out). Functionally, produces ATP from ADP in the presence of a proton gradient across the membrane. The alpha chain is a regulatory subunit. The chain is ATP synthase subunit alpha from Shewanella sp. (strain ANA-3).